The sequence spans 727 residues: Telomere repeats-binding bouquet formation protein 1 (727 aa).

2 ARM repeats span residues 101-144 (ELFE…RETG) and 339-382 (NGLP…GEYP). Residues 398 to 446 (ENNLEEHWRKAKEILHRIEQLEREGNEEEIQRENYQDNISSMNISIQNT) are a coiled coil. The segment covering 457-468 (RGSKAEDEDKSH) has biased composition (basic and acidic residues). The tract at residues 457-493 (RGSKAEDEDKSHSRQLQSYKSHGVMSKACTNDDQMKT) is disordered. Positions 523-662 (QNLHEETTFE…QRLSNESTTP (140 aa)) are interaction with TERF1. Thr648 is modified (phosphothreonine). The Myb-like domain occupies 666 to 719 (KKRRIRKNFTEEEVNYLFNGVKKMGNHWNSILWSFPFQQGRKAVDLAHKYHKLT).

This sequence belongs to the TERB1 family. In terms of assembly, component of the MAJIN-TERB1-TERB2 complex, composed of MAJIN, TERB1 and TERB2. Interacts with TERF1, STAG3 and SUN1. Interacts (via Myb-like domain) with the cohesin complex; probably mediated via interaction with STAG3. Phosphorylated by CDK. Phosphorylation by CDK takes place in late prophase when the cap exchange is prominent. is important for the stabilization of telomere attachment but dispenable for the cap exchange.

The protein localises to the chromosome. It localises to the telomere. It is found in the nucleus inner membrane. In terms of biological role, meiosis-specific telomere-associated protein involved in meiotic telomere attachment to the nucleus inner membrane, a crucial step for homologous pairing and synapsis. Component of the MAJIN-TERB1-TERB2 complex, which promotes telomere cap exchange by mediating attachment of telomeric DNA to the inner nuclear membrane and replacement of the protective cap of telomeric chromosomes: in early meiosis, the MAJIN-TERB1-TERB2 complex associates with telomeric DNA and the shelterin/telosome complex. During prophase, the complex matures and promotes release of the shelterin/telosome complex from telomeric DNA. In the MAJIN-TERB1-TERB2 complex, TERB1 probably mediates association with the shelterin/telosome complex via interaction with TERF1, promoting priming telomeric DNA attachment'. Promotes telomere association with the nuclear envelope and deposition of the SUN-KASH/LINC complex. Also recruits cohesin to telomeres to develop structural rigidity. This is Telomere repeats-binding bouquet formation protein 1 from Homo sapiens (Human).